The primary structure comprises 101 residues: NAD(P)H-quinone oxidoreductase subunit 4L, chloroplastic (101 aa).

Helical transmembrane passes span 2 to 22 (MLEH…YGLI), 32 to 52 (MCLE…SDFF), and 61 to 81 (IFSI…PAIV).

Belongs to the complex I subunit 4L family. In terms of assembly, NDH is composed of at least 16 different subunits, 5 of which are encoded in the nucleus.

The protein localises to the plastid. It localises to the chloroplast thylakoid membrane. It carries out the reaction a plastoquinone + NADH + (n+1) H(+)(in) = a plastoquinol + NAD(+) + n H(+)(out). It catalyses the reaction a plastoquinone + NADPH + (n+1) H(+)(in) = a plastoquinol + NADP(+) + n H(+)(out). Its function is as follows. NDH shuttles electrons from NAD(P)H:plastoquinone, via FMN and iron-sulfur (Fe-S) centers, to quinones in the photosynthetic chain and possibly in a chloroplast respiratory chain. The immediate electron acceptor for the enzyme in this species is believed to be plastoquinone. Couples the redox reaction to proton translocation, and thus conserves the redox energy in a proton gradient. This is NAD(P)H-quinone oxidoreductase subunit 4L, chloroplastic from Vitis vinifera (Grape).